Here is a 111-residue protein sequence, read N- to C-terminus: Prostate and testis expressed protein 2 (111 aa).

The N-terminal stretch at 1–18 (MFVLVMICLFCQYWGVLN) is a signal peptide. The region spanning 27 to 108 (LLCYKCKKYH…CKHSNYCNLP (82 aa)) is the UPAR/Ly6 domain. 4 disulfide bridges follow: Cys-29-Cys-55, Cys-32-Cys-40, Cys-47-Cys-78, and Cys-82-Cys-99.

It belongs to the PATE family. In terms of tissue distribution, expressed in prostate, testis, brain and lung.

The protein localises to the secreted. This Mus musculus (Mouse) protein is Prostate and testis expressed protein 2 (Pate2).